The following is a 439-amino-acid chain: Exodeoxyribonuclease 7 large subunit (439 aa).

It belongs to the XseA family. As to quaternary structure, heterooligomer composed of large and small subunits.

The protein localises to the cytoplasm. The catalysed reaction is Exonucleolytic cleavage in either 5'- to 3'- or 3'- to 5'-direction to yield nucleoside 5'-phosphates.. Functionally, bidirectionally degrades single-stranded DNA into large acid-insoluble oligonucleotides, which are then degraded further into small acid-soluble oligonucleotides. The polypeptide is Exodeoxyribonuclease 7 large subunit (Haemophilus influenzae (strain ATCC 51907 / DSM 11121 / KW20 / Rd)).